The chain runs to 129 residues: Large ribosomal subunit protein bL12c (129 aa).

The protein belongs to the bacterial ribosomal protein bL12 family. In terms of assembly, homodimer. Part of the ribosomal stalk of the 50S ribosomal subunit. Forms a multimeric L10(L12)X complex, where L10 forms an elongated spine to which 2 to 4 L12 dimers bind in a sequential fashion. Binds GTP-bound translation factors.

Its subcellular location is the plastid. The protein localises to the chloroplast. Its function is as follows. Forms part of the ribosomal stalk which helps the ribosome interact with GTP-bound translation factors. Is thus essential for accurate translation. The polypeptide is Large ribosomal subunit protein bL12c (Pyropia yezoensis (Susabi-nori)).